A 234-amino-acid polypeptide reads, in one-letter code: Phosphoribosylaminoimidazole-succinocarboxamide synthase (234 aa).

The protein belongs to the SAICAR synthetase family.

It carries out the reaction 5-amino-1-(5-phospho-D-ribosyl)imidazole-4-carboxylate + L-aspartate + ATP = (2S)-2-[5-amino-1-(5-phospho-beta-D-ribosyl)imidazole-4-carboxamido]succinate + ADP + phosphate + 2 H(+). It functions in the pathway purine metabolism; IMP biosynthesis via de novo pathway; 5-amino-1-(5-phospho-D-ribosyl)imidazole-4-carboxamide from 5-amino-1-(5-phospho-D-ribosyl)imidazole-4-carboxylate: step 1/2. The protein is Phosphoribosylaminoimidazole-succinocarboxamide synthase of Clostridium botulinum (strain Okra / Type B1).